The sequence spans 250 residues: MLMRQKGIIIKAVDYGESDKIITILNEHGAKVPLMARRAKKVKTGLQAQTQLFVYGLFIYNKWRGMGTLNSVDVISQHYKLQMDLYVSSYASLAAETIERSMDEGDVAPYNYQLLQFVLEKIESGTSAQLMSVVVMLKCMKRFGFTASFNRCAVSGNDTQADLIGYSFKYDGAISRQEASKDVHAVILSNKTLYLLDVLQKLPIDKMNSLNIHQEIIDEMSDIILMLYREYAGMFFKSQKLINQLKRLEQ.

It belongs to the RecO family.

Its function is as follows. Involved in DNA repair and RecF pathway recombination. In Staphylococcus aureus (strain MRSA252), this protein is DNA repair protein RecO.